We begin with the raw amino-acid sequence, 245 residues long: 1-(5-phosphoribosyl)-5-[(5-phosphoribosylamino)methylideneamino] imidazole-4-carboxamide isomerase (245 aa).

The active-site Proton acceptor is the Asp7. Asp129 serves as the catalytic Proton donor.

It belongs to the HisA/HisF family.

The protein resides in the cytoplasm. It carries out the reaction 1-(5-phospho-beta-D-ribosyl)-5-[(5-phospho-beta-D-ribosylamino)methylideneamino]imidazole-4-carboxamide = 5-[(5-phospho-1-deoxy-D-ribulos-1-ylimino)methylamino]-1-(5-phospho-beta-D-ribosyl)imidazole-4-carboxamide. It functions in the pathway amino-acid biosynthesis; L-histidine biosynthesis; L-histidine from 5-phospho-alpha-D-ribose 1-diphosphate: step 4/9. The polypeptide is 1-(5-phosphoribosyl)-5-[(5-phosphoribosylamino)methylideneamino] imidazole-4-carboxamide isomerase (Shigella boydii serotype 4 (strain Sb227)).